The following is a 365-amino-acid chain: Spermidine-binding periplasmic protein SpuE (365 aa).

The N-terminal stretch at M1–A24 is a signal peptide. Residues T35, E181, D242, and N269 each contribute to the spermidine site.

It belongs to the bacterial solute-binding protein PotD/PotF family.

Its subcellular location is the periplasm. Spermidine-binding protein probably required for its uptake into cells. Binds spermidine with high affinity (KD=14.3 nM). Does not bind putrescine, cadaverine or spermine. Spermidine binding induces large inter-domain conformational changes. Implicated in induction of type 3 secretion systems (T3SS), which play a role in virulence. This chain is Spermidine-binding periplasmic protein SpuE (spuE), found in Pseudomonas aeruginosa (strain ATCC 15692 / DSM 22644 / CIP 104116 / JCM 14847 / LMG 12228 / 1C / PRS 101 / PAO1).